The following is a 100-amino-acid chain: Class II hydrophobin 4 (100 aa).

An N-terminal signal peptide occupies residues 1-17 (MQFYAIASLFLAGTAFA). 4 disulfide bridges follow: Cys-29–Cys-79, Cys-40–Cys-70, Cys-41–Cys-53, and Cys-80–Cys-92.

Belongs to the cerato-ulmin hydrophobin family.

It is found in the secreted. The protein localises to the cell wall. In terms of biological role, aerial growth, conidiation, and dispersal of filamentous fungi in the environment rely upon a capability of their secreting small amphipathic proteins called hydrophobins (HPBs) with low sequence identity. Class I can self-assemble into an outermost layer of rodlet bundles on aerial cell surfaces, conferring cellular hydrophobicity that supports fungal growth, development and dispersal; whereas Class II form highly ordered films at water-air interfaces through intermolecular interactions but contribute nothing to the rodlet structure. Does not seem to be important for the ability to cause seedling disease. This Gibberella moniliformis (Maize ear and stalk rot fungus) protein is Class II hydrophobin 4.